Reading from the N-terminus, the 179-residue chain is Large ribosomal subunit protein uL5 (179 aa).

Belongs to the universal ribosomal protein uL5 family. In terms of assembly, part of the 50S ribosomal subunit; part of the 5S rRNA/L5/L18/L25 subcomplex. Contacts the 5S rRNA and the P site tRNA. Forms a bridge to the 30S subunit in the 70S ribosome.

In terms of biological role, this is one of the proteins that bind and probably mediate the attachment of the 5S RNA into the large ribosomal subunit, where it forms part of the central protuberance. In the 70S ribosome it contacts protein S13 of the 30S subunit (bridge B1b), connecting the 2 subunits; this bridge is implicated in subunit movement. Contacts the P site tRNA; the 5S rRNA and some of its associated proteins might help stabilize positioning of ribosome-bound tRNAs. This Salmonella agona (strain SL483) protein is Large ribosomal subunit protein uL5.